A 777-amino-acid polypeptide reads, in one-letter code: C6 finger domain transcription factor adaR (777 aa).

The disordered stretch occupies residues 1 to 20 (MEQRSSPARSLPPRKTTTTP). Residues 24 to 50 (CELCRKRKVKCDKLTPCTNCAASGTVC) constitute a DNA-binding region (zn(2)-C6 fungal-type). Disordered stretches follow at residues 61 to 85 (GRHA…TDRI), 111 to 144 (NSHS…NPNT), 182 to 213 (SSLA…VLGL), 419 to 440 (PQHI…PNRE), 468 to 496 (RKVD…DPSW), and 655 to 699 (LPPS…PTGS). Positions 475–489 (PTPTSSTSGTSTSRS) are enriched in low complexity. Pro residues predominate over residues 668–677 (ATPPTFPGVP).

The protein resides in the nucleus. Transcription factor that specifically regulates the expression of the ada gene cluster involved in the biosynthesis of the linear tetracyclic TAN-1612 neuropeptide Y receptor antagonist. The chain is C6 finger domain transcription factor adaR from Aspergillus niger (strain ATCC MYA-4892 / CBS 513.88 / FGSC A1513).